Reading from the N-terminus, the 24-residue chain is FFPIIAGMAAKLIPSLFCKITKKC.

An intrachain disulfide couples cysteine 18 to cysteine 24.

In terms of tissue distribution, expressed by the skin glands.

It localises to the secreted. Functionally, antimicrobial peptide with activity against Gram-negative and Gram-positive bacteria (MIC=13 uM against E.coli, MIC=3 uM against S.aureus) and fungi (MIC=6 uM against C.albicans). Shows hemolytic activity on human erythrocytes (HC(50)=7 uM). The protein is Brevinin-1SPa of Lithobates septentrionalis (Mink frog).